Here is a 360-residue protein sequence, read N- to C-terminus: MSIICAKVAWLPLTLGTAMGFLITFYLARTLLERNSQPPLALRSWNNMELLPEVGMSHFHLPEDNSVSEELSKKVRVLCWIMTGPTNLKTKAIHVKNSWTRHCNVALFMSSITDEDFPAIGLGTGEGRDKLYWKTIRAFHYAHKYYLNETEWFFKADDDTYVIMDNLRWMLSNYTADQPIYFGKRFKPYIKQGYMSGGAGYVLSREALIRFVEGFRTGVCKHTTSTEDVAIGNCMQLMGVIAGDSRDTEKRETFHPFPPEHHLTMKFSESKSFWYWSYCVYPIVEGPQCCSDLAISFHYISPEDMYTLEYFIYHLRAHGYQYRYQPPLSDNADNLPVYIENETVKPNRTISDFLEPPMES.

The Cytoplasmic segment spans residues 1-7; that stretch reads MSIICAK. The chain crosses the membrane as a helical; Signal-anchor for type II membrane protein span at residues 8–28; it reads VAWLPLTLGTAMGFLITFYLA. At 29-360 the chain is on the lumenal side; sequence RTLLERNSQP…SDFLEPPMES (332 aa). Cysteine 79 and cysteine 103 are oxidised to a cystine. 5 residues coordinate UDP: methionine 82, glutamate 126, glycine 127, arginine 128, and lysine 134. Asparagine 148 is a glycosylation site (N-linked (GlcNAc...) asparagine). Residue aspartate 157 participates in UDP binding. Residues aspartate 157 and aspartate 159 each coordinate Mn(2+). The N-linked (GlcNAc...) asparagine glycan is linked to asparagine 173. Residues cysteine 220 and cysteine 234 are joined by a disulfide bond. A glycoprotein is bound at residue tryptophan 274. Cysteine 289 and cysteine 290 form a disulfide bridge. Histidine 298 and tyrosine 299 together coordinate UDP. Histidine 298 is a binding site for Mn(2+). Residues asparagine 341 and asparagine 347 are each glycosylated (N-linked (GlcNAc...) asparagine).

The protein belongs to the glycosyltransferase 31 family. Beta3-Gal-T subfamily. In terms of assembly, homodimer; disulfide-linked. Requires Mn(2+) as cofactor.

The protein resides in the membrane. It catalyses the reaction an N-acetyl-alpha-D-galactosaminyl derivative + UDP-alpha-D-galactose = a beta-D-galactosyl-(1-&gt;3)-N-acetyl-alpha-D-galactosaminyl derivative + UDP + H(+). It participates in protein modification; protein glycosylation. Functionally, glycosyltransferase that generates the core 1 O-glycan Gal-beta1-3GalNAc-alpha1-Ser/Thr (T antigen), which is a precursor for many extended O-glycans in glycoproteins. The chain is Glycoprotein-N-acetylgalactosamine 3-beta-galactosyltransferase 1 (c1galt1) from Xenopus laevis (African clawed frog).